Consider the following 226-residue polypeptide: Thiamine-phosphate synthase (226 aa).

Residues 46–50 and aspartate 83 contribute to the 4-amino-2-methyl-5-(diphosphooxymethyl)pyrimidine site; that span reads QFRDK. Positions 84 and 103 each coordinate Mg(2+). Residue serine 122 coordinates 4-amino-2-methyl-5-(diphosphooxymethyl)pyrimidine. Residue 149–151 participates in 2-[(2R,5Z)-2-carboxy-4-methylthiazol-5(2H)-ylidene]ethyl phosphate binding; the sequence is TQS. Position 152 (lysine 152) interacts with 4-amino-2-methyl-5-(diphosphooxymethyl)pyrimidine. 2-[(2R,5Z)-2-carboxy-4-methylthiazol-5(2H)-ylidene]ethyl phosphate is bound by residues glycine 181 and 201–202; that span reads IT.

Belongs to the thiamine-phosphate synthase family. Mg(2+) serves as cofactor.

It catalyses the reaction 2-[(2R,5Z)-2-carboxy-4-methylthiazol-5(2H)-ylidene]ethyl phosphate + 4-amino-2-methyl-5-(diphosphooxymethyl)pyrimidine + 2 H(+) = thiamine phosphate + CO2 + diphosphate. It carries out the reaction 2-(2-carboxy-4-methylthiazol-5-yl)ethyl phosphate + 4-amino-2-methyl-5-(diphosphooxymethyl)pyrimidine + 2 H(+) = thiamine phosphate + CO2 + diphosphate. The catalysed reaction is 4-methyl-5-(2-phosphooxyethyl)-thiazole + 4-amino-2-methyl-5-(diphosphooxymethyl)pyrimidine + H(+) = thiamine phosphate + diphosphate. It participates in cofactor biosynthesis; thiamine diphosphate biosynthesis; thiamine phosphate from 4-amino-2-methyl-5-diphosphomethylpyrimidine and 4-methyl-5-(2-phosphoethyl)-thiazole: step 1/1. Its function is as follows. Condenses 4-methyl-5-(beta-hydroxyethyl)thiazole monophosphate (THZ-P) and 2-methyl-4-amino-5-hydroxymethyl pyrimidine pyrophosphate (HMP-PP) to form thiamine monophosphate (TMP). The chain is Thiamine-phosphate synthase from Haemophilus influenzae (strain ATCC 51907 / DSM 11121 / KW20 / Rd).